The primary structure comprises 604 residues: NADH-ubiquinone oxidoreductase chain 5 (604 aa).

16 helical membrane-spanning segments follow: residues 2–22 (FSSLMLVSLLVLTLPIMLSIF), 41–61 (AFITSLIPTMMFIHSGQETII), 85–105 (MIFVPVALFVTWSIMEFSLWY), 115–135 (FFKYLLTFLITMMILVTANNL), 138–158 (LFIGWEGVGIMSFLLIGWWYG), 169–189 (AILYNRIGDIGFIMAMAWFLF), 209–231 (LPLLGLLLAATGKSAQFGLHPWL), 239–259 (TPVSALLHSSTMVVAGVFLLI), 271–291 (IQSLTLCLGAITTLFTAICAL), 299–318 (IIAFSTSSQLGLMIVTIGIN), 323–345 (AFLHICTHAFFKAMLFMCSGSII), 364–384 (MPFTTTSLIIGSLALTGIPFL), 411–431 (LIATSLTAVYSTRIIFFALLG), 455–475 (LLIGSIFAGFFISNNIYPTTV), 486–506 (LTALAVTILGFTLALELSLMT), and 582–602 (IKLYFLSFLITLTLSMLLFNL).

It belongs to the complex I subunit 5 family. In terms of assembly, core subunit of respiratory chain NADH dehydrogenase (Complex I) which is composed of 45 different subunits.

It is found in the mitochondrion inner membrane. The catalysed reaction is a ubiquinone + NADH + 5 H(+)(in) = a ubiquinol + NAD(+) + 4 H(+)(out). In terms of biological role, core subunit of the mitochondrial membrane respiratory chain NADH dehydrogenase (Complex I) which catalyzes electron transfer from NADH through the respiratory chain, using ubiquinone as an electron acceptor. Essential for the catalytic activity and assembly of complex I. The chain is NADH-ubiquinone oxidoreductase chain 5 (MT-ND5) from Equus caballus (Horse).